We begin with the raw amino-acid sequence, 238 residues long: Small ribosomal subunit protein uS2 (238 aa).

It belongs to the universal ribosomal protein uS2 family.

The chain is Small ribosomal subunit protein uS2 from Actinobacillus pleuropneumoniae serotype 7 (strain AP76).